Reading from the N-terminus, the 980-residue chain is Putative helicase 087L (980 aa).

The 188-residue stretch at 59–246 (INPHTLYDGV…IDLFNLILRT (188 aa)) folds into the Helicase ATP-binding domain. Position 72–79 (72–79 (HEMGTGKT)) interacts with ATP. The short motif at 189-192 (DEAH) is the DEAH box element. Positions 389-546 (RLSFVFSEFV…SIDLHMYEIA (158 aa)) constitute a Helicase C-terminal domain.

Belongs to the IIV-6 022L family. SNF2/RAD54 helicase subfamily.

In Invertebrate iridescent virus 3 (IIV-3), this protein is Putative helicase 087L.